The following is a 440-amino-acid chain: Tol-Pal system protein TolB (440 aa).

Residues 1–21 (MKIFGKWLLVTLLICSMPVKA) form the signal peptide.

It belongs to the TolB family. In terms of assembly, the Tol-Pal system is composed of five core proteins: the inner membrane proteins TolA, TolQ and TolR, the periplasmic protein TolB and the outer membrane protein Pal. They form a network linking the inner and outer membranes and the peptidoglycan layer.

It localises to the periplasm. In terms of biological role, part of the Tol-Pal system, which plays a role in outer membrane invagination during cell division and is important for maintaining outer membrane integrity. This chain is Tol-Pal system protein TolB, found in Shewanella halifaxensis (strain HAW-EB4).